The following is a 410-amino-acid chain: LL-diaminopimelate aminotransferase (410 aa).

Substrate contacts are provided by Tyr15 and Gly42. Residues Tyr72, 108 to 109 (SK), Tyr132, Asn187, Tyr218, and 246 to 248 (SFS) contribute to the pyridoxal 5'-phosphate site. The substrate site is built by Lys109, Tyr132, and Asn187. An N6-(pyridoxal phosphate)lysine modification is found at Lys249. Pyridoxal 5'-phosphate-binding residues include Arg257 and Asn292. Substrate contacts are provided by Asn292 and Arg388.

This sequence belongs to the class-I pyridoxal-phosphate-dependent aminotransferase family. LL-diaminopimelate aminotransferase subfamily. Homodimer. Requires pyridoxal 5'-phosphate as cofactor.

The catalysed reaction is (2S,6S)-2,6-diaminopimelate + 2-oxoglutarate = (S)-2,3,4,5-tetrahydrodipicolinate + L-glutamate + H2O + H(+). It participates in amino-acid biosynthesis; L-lysine biosynthesis via DAP pathway; LL-2,6-diaminopimelate from (S)-tetrahydrodipicolinate (aminotransferase route): step 1/1. In terms of biological role, involved in the synthesis of meso-diaminopimelate (m-DAP or DL-DAP), required for both lysine and peptidoglycan biosynthesis. Catalyzes the direct conversion of tetrahydrodipicolinate to LL-diaminopimelate. The polypeptide is LL-diaminopimelate aminotransferase (Geobacter metallireducens (strain ATCC 53774 / DSM 7210 / GS-15)).